A 475-amino-acid chain; its full sequence is Aspartyl/glutamyl-tRNA(Asn/Gln) amidotransferase subunit B (475 aa).

Belongs to the GatB/GatE family. GatB subfamily. In terms of assembly, heterotrimer of A, B and C subunits.

It catalyses the reaction L-glutamyl-tRNA(Gln) + L-glutamine + ATP + H2O = L-glutaminyl-tRNA(Gln) + L-glutamate + ADP + phosphate + H(+). The catalysed reaction is L-aspartyl-tRNA(Asn) + L-glutamine + ATP + H2O = L-asparaginyl-tRNA(Asn) + L-glutamate + ADP + phosphate + 2 H(+). Allows the formation of correctly charged Asn-tRNA(Asn) or Gln-tRNA(Gln) through the transamidation of misacylated Asp-tRNA(Asn) or Glu-tRNA(Gln) in organisms which lack either or both of asparaginyl-tRNA or glutaminyl-tRNA synthetases. The reaction takes place in the presence of glutamine and ATP through an activated phospho-Asp-tRNA(Asn) or phospho-Glu-tRNA(Gln). The protein is Aspartyl/glutamyl-tRNA(Asn/Gln) amidotransferase subunit B of Staphylococcus saprophyticus subsp. saprophyticus (strain ATCC 15305 / DSM 20229 / NCIMB 8711 / NCTC 7292 / S-41).